The following is a 101-amino-acid chain: Pro-corazonin (101 aa).

The signal sequence occupies residues 1-19 (MVTNITLILTLMTLASVTA). The residue at position 20 (glutamine 20) is a Pyrrolidone carboxylic acid. Residue asparagine 30 is modified to Asparagine amide.

Belongs to the corazonin family.

Its subcellular location is the secreted. Its function is as follows. Cardioactive peptide. Corazonin is probably involved in the physiological regulation of the heart beat. The chain is Pro-corazonin (crz) from Bombyx mori (Silk moth).